A 160-amino-acid chain; its full sequence is Large ribosomal subunit protein eL14 (160 aa).

The tract at residues 136–160 (SDGTPRILKKDRRERLRAEKAKAKK) is disordered. A compositionally biased stretch (basic and acidic residues) spans 146 to 160 (DRRERLRAEKAKAKK).

The protein belongs to the eukaryotic ribosomal protein eL14 family.

The protein is Large ribosomal subunit protein eL14 (RpL14) of Drosophila virilis (Fruit fly).